Here is an 89-residue protein sequence, read N- to C-terminus: Small ribosomal subunit protein bS20 (89 aa).

A disordered region spans residues methionine 1 to methionine 29.

This sequence belongs to the bacterial ribosomal protein bS20 family.

In terms of biological role, binds directly to 16S ribosomal RNA. This Haemophilus influenzae (strain 86-028NP) protein is Small ribosomal subunit protein bS20.